Reading from the N-terminus, the 749-residue chain is Soluble starch synthase 2-1, chloroplastic/amyloplastic (749 aa).

The N-terminal 44 residues, 1 to 44 (MAAAAVSSLLAPSGSCYSPGCHSCWGPGPGGGRRLPSPRRRPIT), are a transit peptide targeting the chloroplast. Lys-272 serves as a coordination point for ADP-alpha-D-glucose.

This sequence belongs to the glycosyltransferase 1 family. Bacterial/plant glycogen synthase subfamily. In terms of tissue distribution, expressed in endosperm, leaves, and weakly in roots.

It is found in the plastid. It localises to the amyloplast. Its subcellular location is the chloroplast. The enzyme catalyses [(1-&gt;4)-alpha-D-glucosyl](n) + ADP-alpha-D-glucose = [(1-&gt;4)-alpha-D-glucosyl](n+1) + ADP + H(+). It functions in the pathway glycan biosynthesis; starch biosynthesis. Functionally, may be involved in starch synthesis in endosperm amyloplasts and contribute to the deposition of transient starch in chloroplasts of leaves. The chain is Soluble starch synthase 2-1, chloroplastic/amyloplastic (SSII-1) from Oryza sativa subsp. japonica (Rice).